Here is a 126-residue protein sequence, read N- to C-terminus: MAKQKQERRLPAAEAMCKVRTLRTSPRKLNLVAQSIRGLNVQRALNELEFSHKRIAQDVRKALYSAISNAENNHNLDIDSLVVAEAYVGKNLIMKRFSPRARGRATRVEKPFSEITIVVRELGEAA.

This sequence belongs to the universal ribosomal protein uL22 family. As to quaternary structure, part of the 50S ribosomal subunit.

Functionally, this protein binds specifically to 23S rRNA; its binding is stimulated by other ribosomal proteins, e.g. L4, L17, and L20. It is important during the early stages of 50S assembly. It makes multiple contacts with different domains of the 23S rRNA in the assembled 50S subunit and ribosome. In terms of biological role, the globular domain of the protein is located near the polypeptide exit tunnel on the outside of the subunit, while an extended beta-hairpin is found that lines the wall of the exit tunnel in the center of the 70S ribosome. The polypeptide is Large ribosomal subunit protein uL22 (Caulobacter vibrioides (strain ATCC 19089 / CIP 103742 / CB 15) (Caulobacter crescentus)).